A 441-amino-acid polypeptide reads, in one-letter code: BTB/POZ domain-containing protein At2g24240 (441 aa).

The BTB domain maps to 6–76 (DRIKFNVGGR…LRTGDLNVPA (71 aa)).

It functions in the pathway protein modification; protein ubiquitination. Functionally, may act as a substrate-specific adapter of an E3 ubiquitin-protein ligase complex (CUL3-RBX1-BTB) which mediates the ubiquitination and subsequent proteasomal degradation of target proteins. The protein is BTB/POZ domain-containing protein At2g24240 of Arabidopsis thaliana (Mouse-ear cress).